The following is a 628-amino-acid chain: MSISSCSAQDGCASTAMTRTAMRQNKFATSAPASVPRLTGTEPQLGSMQGAQELLEQLKASFTSSHLIQAIGLSGRQLPLLTKDQEILPYLFNAAGVRYVQPHPNGDASQRILLLNVPASSPTPDVVLSAILKHRLELIHEFELSLGYEHLSSDQILEALLPTSIVDTDGVPTGFTIVGHIAHLNLLSVYKPFRFLVGHIILSKHIGTLRTVVNKLDSIDTQFRFFEMELLAGEADFVAQVSESDCSFQFDFRSVYWNSRLHAEHMRLIKKCRPNQVLADVMAGVGPFAVPAAKRGTWVLANDLNPSSYESLTKNAEINKVLLREGEAKPDKDGGLVATCMDGREFVRWSMLEVWKRGFAGRPMGFDGEQFDVQDDKLRQSARKMRKEQAKKNRALYAVRQAENTLEGAAESLANLSVDEPDVAATMGQVERHPERKLVDHFVMNLPAIALEFLDAFRGAYTHLATIVGKQRLLCQLELHKLDASIHRLPMIHVHCFSKDPFTPALDILTRANEALNIPRDAPYRLMAKPILPPAQTFAGLRKLCDASQSASYLSSHPNYSKYKHLESQHDFMQYVHQEWLERDAAQHTPNLSIHYVRDVAPNKQMYCLSFQCPSQVLWANTSTSQHT.

Residues His265, 303–304 (DL), 342–343 (DG), and Asn445 each bind S-adenosyl-L-methionine.

It belongs to the class I-like SAM-binding methyltransferase superfamily. TRM5/TYW2 family. Monomer.

It is found in the mitochondrion matrix. Its subcellular location is the nucleus. It localises to the cytoplasm. It catalyses the reaction guanosine(37) in tRNA + S-adenosyl-L-methionine = N(1)-methylguanosine(37) in tRNA + S-adenosyl-L-homocysteine + H(+). Specifically methylates the N1 position of guanosine-37 in various cytoplasmic and mitochondrial tRNAs. Methylation is not dependent on the nature of the nucleoside 5' of the target nucleoside. This is the first step in the biosynthesis of wybutosine (yW), a modified base adjacent to the anticodon of tRNAs and required for accurate decoding. The chain is tRNA (guanine(37)-N(1))-methyltransferase from Mycosarcoma maydis (Corn smut fungus).